A 173-amino-acid polypeptide reads, in one-letter code: Mesencephalic astrocyte-derived neurotrophic factor homolog (173 aa).

Residues 1–22 (MKTAHLVVVVCFLAGALQTAVA) form the signal peptide. 4 disulfides stabilise this stretch: C28/C114, C31/C103, C61/C72, and C148/C151.

It belongs to the ARMET family.

It localises to the secreted. In terms of biological role, required during the maturation of the embryonic nervous system for maintenance of neuronal and cuticular connectivity. Essential for maintenance of dopaminergic neurons and dopamine levels. The protein is Mesencephalic astrocyte-derived neurotrophic factor homolog of Drosophila ananassae (Fruit fly).